The sequence spans 320 residues: Malate dehydrogenase (320 aa).

Residues 10–15 (GAGQIG) and aspartate 34 contribute to the NAD(+) site. Positions 83 and 89 each coordinate substrate. NAD(+) contacts are provided by residues asparagine 96 and 119-121 (ITN). The substrate site is built by asparagine 121 and arginine 152. Residue histidine 176 is the Proton acceptor of the active site.

The protein belongs to the LDH/MDH superfamily. MDH type 3 family.

It catalyses the reaction (S)-malate + NAD(+) = oxaloacetate + NADH + H(+). Functionally, catalyzes the reversible oxidation of malate to oxaloacetate. In Cereibacter sphaeroides (strain ATCC 17025 / ATH 2.4.3) (Rhodobacter sphaeroides), this protein is Malate dehydrogenase.